Consider the following 527-residue polypeptide: Serine/threonine-protein kinase NLK (527 aa).

Sufficient for interaction with DAPK3 stretches follow at residues methionine 1–histidine 125 and histidine 124–isoleucine 416. 2 required for interaction with TAB2 regions span residues methionine 1–glutamine 304 and tyrosine 434–glutamate 527. Disordered stretches follow at residues alanine 22–alanine 72 and glutamine 90–glutamate 139. Residues glycine 26 to histidine 54 show a composition bias toward basic residues. Residues proline 103–alanine 119 are compositionally biased toward low complexity. The segment covering lysine 122 to histidine 131 has biased composition (basic residues). Residues isoleucine 138–leucine 427 form the Protein kinase domain. Residues isoleucine 144–valine 152 and lysine 167 each bind ATP. Aspartate 264 functions as the Proton acceptor in the catalytic mechanism. Threonine 298 is modified (phosphothreonine; by autocatalysis). The TQE signature appears at threonine 298–glutamate 300. The interval aspartate 428–glutamate 527 is required for homodimerization and kinase activation and localization to the nucleus. Serine 522 carries the phosphoserine modification.

This sequence belongs to the protein kinase superfamily. CMGC Ser/Thr protein kinase family. MAP kinase subfamily. Homodimer. Homodimerization is required for intermolecular autophosphorylation, kinase activation and nuclear localization. Interacts with RNF138/NARF. Interacts with FOXO1 and FOXO3. Interacts with the upstream activating kinases HIPK2 and MAP3K7/TAK1. Interaction with MAP3K7/TAK1 seems to be indirect, and may be mediated by other proteins such as STAT3, TAB1 and TAB2. Interacts with and phosphorylates a number of transcription factors including FOXO4, LEF1, MYB, MYBL1, MYBL2, NOTCH1 and TCF7L2/TCF4. May interact with components of cullin-RING-based SCF (SKP1-CUL1-F-box protein) E3 ubiquitin-protein ligase complexes. Interacts with MEF2A. Interacts with ATF5; the interaction stabilizes ATF5 at the protein level in a kinase-independent manner. Mg(2+) serves as cofactor. Phosphorylated on Thr-298. Intermolecular autophosphorylation on Thr-298 activates the enzyme. Expressed at high levels in the brain, and at lower levels in heart, kidney, lung and liver.

It localises to the nucleus. Its subcellular location is the cytoplasm. It carries out the reaction L-seryl-[protein] + ATP = O-phospho-L-seryl-[protein] + ADP + H(+). It catalyses the reaction L-threonyl-[protein] + ATP = O-phospho-L-threonyl-[protein] + ADP + H(+). Its activity is regulated as follows. Activated by the non-canonical Wnt signaling pathway, in which WNT5A leads to activation of MAP3K7/TAK1 and HIPK2, which subsequently phosphorylates and activates this protein. Activated by dimerization and subsequent intermolecular autophosphorylation on Thr-298. Other cytokines such as IL6 may also activate this regulatory circuit. Functionally, serine/threonine-protein kinase that regulates a number of transcription factors with key roles in cell fate determination. Positive effector of the non-canonical Wnt signaling pathway, acting downstream of WNT5A, MAP3K7/TAK1 and HIPK2. Negative regulator of the canonical Wnt/beta-catenin signaling pathway. Binds to and phosphorylates TCF7L2/TCF4 and LEF1, promoting the dissociation of the TCF7L2/LEF1/beta-catenin complex from DNA, as well as the ubiquitination and subsequent proteolysis of LEF1. Together these effects inhibit the transcriptional activation of canonical Wnt/beta-catenin target genes. Negative regulator of the Notch signaling pathway. Binds to and phosphorylates NOTCH1, thereby preventing the formation of a transcriptionally active ternary complex of NOTCH1, RBPJ/RBPSUH and MAML1. Negative regulator of the MYB family of transcription factors. Phosphorylation of MYB leads to its subsequent proteolysis while phosphorylation of MYBL1 and MYBL2 inhibits their interaction with the coactivator CREBBP. Other transcription factors may also be inhibited by direct phosphorylation of CREBBP itself. Acts downstream of IL6 and MAP3K7/TAK1 to phosphorylate STAT3, which is in turn required for activation of NLK by MAP3K7/TAK1. Upon IL1B stimulus, cooperates with ATF5 to activate the transactivation activity of C/EBP subfamily members. Phosphorylates ATF5 but also stabilizes ATF5 protein levels in a kinase-independent manner. Acts as an inhibitor of the mTORC1 complex in response to osmotic stress by mediating phosphorylation of RPTOR, thereby preventing recruitment of the mTORC1 complex to lysosomes. The chain is Serine/threonine-protein kinase NLK from Mus musculus (Mouse).